We begin with the raw amino-acid sequence, 934 residues long: Bifunctional uridylyltransferase/uridylyl-removing enzyme (934 aa).

The tract at residues 1–379 (MSAHDLKLEE…TFSRRKRKLS (379 aa)) is uridylyltransferase. The interval 380 to 736 (DDGAFISENH…AKPHAFEAVT (357 aa)) is uridylyl-removing. The region spanning 496-613 (VDEHLLRCIA…IDFADTVQTM (118 aa)) is the HD domain. 2 ACT domains span residues 737–818 (EITV…DMLA) and 848–931 (VIEV…RSPQ).

It belongs to the GlnD family. Requires Mg(2+) as cofactor.

The enzyme catalyses [protein-PII]-L-tyrosine + UTP = [protein-PII]-uridylyl-L-tyrosine + diphosphate. It carries out the reaction [protein-PII]-uridylyl-L-tyrosine + H2O = [protein-PII]-L-tyrosine + UMP + H(+). Its activity is regulated as follows. Uridylyltransferase (UTase) activity is inhibited by glutamine, while glutamine activates uridylyl-removing (UR) activity. In terms of biological role, modifies, by uridylylation and deuridylylation, the PII regulatory proteins (GlnB and homologs), in response to the nitrogen status of the cell that GlnD senses through the glutamine level. Under low glutamine levels, catalyzes the conversion of the PII proteins and UTP to PII-UMP and PPi, while under higher glutamine levels, GlnD hydrolyzes PII-UMP to PII and UMP (deuridylylation). Thus, controls uridylylation state and activity of the PII proteins, and plays an important role in the regulation of nitrogen assimilation and metabolism. In Brucella suis (strain ATCC 23445 / NCTC 10510), this protein is Bifunctional uridylyltransferase/uridylyl-removing enzyme.